Here is a 291-residue protein sequence, read N- to C-terminus: Polyamine aminopropyltransferase (291 aa).

The 241-residue stretch at 5–245 (PGPIVLMEPL…YAVNFVLGSL (241 aa)) folds into the PABS domain. Gln-36 lines the S-methyl-5'-thioadenosine pocket. His-67 and Glu-91 together coordinate spermidine. Residues Asp-111 and 143 to 144 (DG) each bind S-methyl-5'-thioadenosine. The Proton acceptor role is filled by Asp-164.

This sequence belongs to the spermidine/spermine synthase family. In terms of assembly, homodimer or homotetramer.

The protein resides in the cytoplasm. It catalyses the reaction norspermidine + S-adenosyl 3-(methylsulfanyl)propylamine = norspermine + S-methyl-5'-thioadenosine + H(+). The enzyme catalyses S-adenosyl 3-(methylsulfanyl)propylamine + spermidine = thermospermine + S-methyl-5'-thioadenosine + H(+). Its function is as follows. Involved in the biosynthesis of polyamines which are thought to support the growth of thermophilic microorganisms under high-temperature conditions. It seems that long-chain and branched-chain of polyamines effectively stabilize DNA and RNA, respectively. Catalyzes the irreversible transfer of a propylamine group from the amino donor S-adenosylmethioninamine (decarboxy-AdoMet) to norspermidine and 1,3-diaminopropane to yield norspermine, and to spermidine to yield thermospermine. It can also synthesize thermospermine from putrescine (1,4-diaminobutane) and caldopentamine from norspermine with a very low activity. The biosynthesis of caldohexamine and caldoheptamine from caldopentamine has been also observed. This is Polyamine aminopropyltransferase from Pyrobaculum aerophilum (strain ATCC 51768 / DSM 7523 / JCM 9630 / CIP 104966 / NBRC 100827 / IM2).